Reading from the N-terminus, the 520-residue chain is Cytochrome P450 84A1 (520 aa).

N-acetylmethionine is present on Met-1. A helical membrane pass occupies residues 12–32 (LSDPTTSLVIVVSLFIFISFI). Cys-458 is a binding site for heme.

The protein belongs to the cytochrome P450 family. Heme is required as a cofactor.

It localises to the membrane. It functions in the pathway aromatic compound metabolism; phenylpropanoid biosynthesis. The chain is Cytochrome P450 84A1 (CYP84A1) from Arabidopsis thaliana (Mouse-ear cress).